We begin with the raw amino-acid sequence, 231 residues long: 7-cyano-7-deazaguanine synthase (231 aa).

ATP is bound at residue 8-18 (FSGGQDSTTCL). The Zn(2+) site is built by Cys188, Cys197, Cys200, and Cys203.

Belongs to the QueC family. Zn(2+) is required as a cofactor.

It catalyses the reaction 7-carboxy-7-deazaguanine + NH4(+) + ATP = 7-cyano-7-deazaguanine + ADP + phosphate + H2O + H(+). It functions in the pathway purine metabolism; 7-cyano-7-deazaguanine biosynthesis. Catalyzes the ATP-dependent conversion of 7-carboxy-7-deazaguanine (CDG) to 7-cyano-7-deazaguanine (preQ(0)). The protein is 7-cyano-7-deazaguanine synthase of Salmonella schwarzengrund (strain CVM19633).